Reading from the N-terminus, the 196-residue chain is ATP-dependent Clp protease proteolytic subunit (196 aa).

The Nucleophile role is filled by Ser96. The active site involves His121.

This sequence belongs to the peptidase S14 family. As to quaternary structure, fourteen ClpP subunits assemble into 2 heptameric rings which stack back to back to give a disk-like structure with a central cavity, resembling the structure of eukaryotic proteasomes.

It localises to the cytoplasm. The catalysed reaction is Hydrolysis of proteins to small peptides in the presence of ATP and magnesium. alpha-casein is the usual test substrate. In the absence of ATP, only oligopeptides shorter than five residues are hydrolyzed (such as succinyl-Leu-Tyr-|-NHMec, and Leu-Tyr-Leu-|-Tyr-Trp, in which cleavage of the -Tyr-|-Leu- and -Tyr-|-Trp bonds also occurs).. Functionally, cleaves peptides in various proteins in a process that requires ATP hydrolysis. Has a chymotrypsin-like activity. Plays a major role in the degradation of misfolded proteins. The polypeptide is ATP-dependent Clp protease proteolytic subunit (Streptococcus pneumoniae (strain ATCC 700669 / Spain 23F-1)).